Here is a 201-residue protein sequence, read N- to C-terminus: uncharacterized protein (201 aa).

Belongs to the methyltransferase superfamily.

This is an uncharacterized protein from Bacillus subtilis (strain 168).